Reading from the N-terminus, the 474-residue chain is Lactococcin A secretion protein LcnD (474 aa).

Residues 1-21 (MFDKKLLESSELYDKRYRNFS) are Cytoplasmic-facing. Residues 22–44 (TLIILPLFILLVGGVIFTFFAHK) traverse the membrane as a helical segment. Topologically, residues 45 to 474 (ELTVISTGSI…LDKIMGRGNQ (430 aa)) are extracellular.

This sequence belongs to the membrane fusion protein (MFP) (TC 8.A.1) family.

The protein localises to the cell membrane. In terms of biological role, involved in the secretion of lactococcin A. The chain is Lactococcin A secretion protein LcnD (lcnD) from Lactococcus lactis subsp. cremoris (Streptococcus cremoris).